The primary structure comprises 425 residues: Light-independent protochlorophyllide reductase subunit N (425 aa).

[4Fe-4S] cluster is bound by residues Cys17, Cys42, and Cys103.

It belongs to the BchN/ChlN family. As to quaternary structure, protochlorophyllide reductase is composed of three subunits; ChlL, ChlN and ChlB. Forms a heterotetramer of two ChlB and two ChlN subunits. [4Fe-4S] cluster serves as cofactor.

The catalysed reaction is chlorophyllide a + oxidized 2[4Fe-4S]-[ferredoxin] + 2 ADP + 2 phosphate = protochlorophyllide a + reduced 2[4Fe-4S]-[ferredoxin] + 2 ATP + 2 H2O. It functions in the pathway porphyrin-containing compound metabolism; chlorophyll biosynthesis (light-independent). In terms of biological role, component of the dark-operative protochlorophyllide reductase (DPOR) that uses Mg-ATP and reduced ferredoxin to reduce ring D of protochlorophyllide (Pchlide) to form chlorophyllide a (Chlide). This reaction is light-independent. The NB-protein (ChlN-ChlB) is the catalytic component of the complex. The sequence is that of Light-independent protochlorophyllide reductase subunit N from Synechococcus sp. (strain CC9605).